We begin with the raw amino-acid sequence, 69 residues long: uncharacterized protein (69 aa).

Residues 5–60 (IREHRKELGLTQEELAERVGVTRQTIIALEKGRYSPSLILAHRIARALGREHIEDI) enclose the HTH cro/C1-type domain. A DNA-binding region (H-T-H motif) is located at residues 16–35 (QEELAERVGVTRQTIIALEK).

This is an uncharacterized protein from Methanothermobacter thermautotrophicus (strain ATCC 29096 / DSM 1053 / JCM 10044 / NBRC 100330 / Delta H) (Methanobacterium thermoautotrophicum).